The primary structure comprises 1347 residues: Protocadherin-11 X-linked (1347 aa).

The first 23 residues, 1–23, serve as a signal peptide directing secretion; the sequence is MDLLSGTYIFAVLLACVVFHSGA. Residues 24-812 lie on the Extracellular side of the membrane; sequence QEKNYTIREE…VSSPTSDYVK (789 aa). 7 consecutive Cadherin domains span residues 26–139, 140–249, 250–355, 362–466, 467–570, 571–673, and 677–795; these read KNYT…APLF, PATV…HPVF, KETE…VPSI, NPVN…APVF, TQSF…SPVF, THNE…KPVF, and PSNY…APVT. 3 N-linked (GlcNAc...) asparagine glycosylation sites follow: asparagine 27, asparagine 48, and asparagine 54. Asparagine 344 carries an N-linked (GlcNAc...) asparagine glycan. Asparagine 553 carries N-linked (GlcNAc...) asparagine glycosylation. N-linked (GlcNAc...) asparagine glycosylation occurs at asparagine 773. The helical transmembrane segment at 813–833 threads the bilayer; that stretch reads ILVAAVAGTITVVVVIFITAV. Residues 834 to 1347 lie on the Cytoplasmic side of the membrane; it reads VRCRQAPHLK…DSPVMEEHPL (514 aa). Disordered regions lie at residues 1057-1091, 1097-1116, and 1325-1347; these read LPEGSQESSSDGGLGDHDAGSLTSTSHGLPLGYPQ, RATPSNRTEGDGNSDPESTF, and TFTPRQQARPSRGDSPVMEEHPL.

It is found in the cell membrane. Its function is as follows. Potential calcium-dependent cell-adhesion protein. This Pan paniscus (Pygmy chimpanzee) protein is Protocadherin-11 X-linked (PCDH11X).